Consider the following 673-residue polypeptide: Putative potassium transport system protein Kup 1 (673 aa).

The next 13 helical transmembrane spans lie at 14-34, 58-78, 101-121, 147-167, 175-195, 196-216, 220-240, 252-272, 294-314, 345-365, 374-394, 403-423, and 427-447; these read GAGFIIAMGIVYGDIGTSPLY, LSLIIWTLTLITTVKYVWIAL, WLIIPAMIGGAALLSDGALTP, LPIVIITLAILAILFLIQRFG, FGPVMFIWFSFLGITGLINLF, GDFSVLQAINPYWAIHLLLSP, AGIFVLGSVFLATTGAEALYS, VSWPFVKVCIILSYCGQAAWL, LIIFSVVLATLAAIIASQALI, LYIPAVNLGLWLAASFIVVYF, AYGLAITVTMLMTTILLTVYL, VFVVLFFGAFIFIEGLFFAAS, and FLHGGYVVVILAALILFVMAI.

It belongs to the HAK/KUP transporter (TC 2.A.72) family.

It is found in the cell membrane. The enzyme catalyses K(+)(in) + H(+)(in) = K(+)(out) + H(+)(out). Functionally, transport of potassium into the cell. Likely operates as a K(+):H(+) symporter. The protein is Putative potassium transport system protein Kup 1 of Lactococcus lactis subsp. cremoris (strain MG1363).